The sequence spans 59 residues: Conotoxin ViVB (59 aa).

An N-terminal signal peptide occupies residues 1–22; it reads MRCVPVFIILLLLIPSAPSAAV. Positions 23–46 are excised as a propeptide; the sequence is QPKTEKDDVPLASFHDSAMRILSR. Position 47 is a pyrrolidone carboxylic acid (Gln47). Val58 is modified (valine amide).

Post-translationally, contains 2 disulfide bonds that can be either 'C1-C3, C2-C4' or 'C1-C4, C2-C3', since these disulfide connectivities have been observed for conotoxins with cysteine framework V (for examples, see AC P0DQQ7 and AC P81755). As to expression, expressed by the venom duct.

It localises to the secreted. This chain is Conotoxin ViVB, found in Conus virgo (Virgin cone).